The following is a 344-amino-acid chain: Sesquiterpene synthase 9 (344 aa).

4 residues coordinate Mg(2+): Asp88, Asn224, Ser228, and Glu232. The DDXXD motif motif lies at 88 to 92 (DEYSD). Positions 224–232 (NDMLSWNVE) match the NSE/DTE motif motif. Arg313 and Tyr314 together coordinate (2E,6E)-farnesyl diphosphate.

It belongs to the terpene synthase family. It depends on Mg(2+) as a cofactor.

Its function is as follows. Terpene cyclase that catalyzes the cyclization of farnesyl diphosphate (FPP) to a single major sesquiterpene scaffold whose chemical structure is still unknown. The chain is Sesquiterpene synthase 9 from Postia placenta (strain ATCC 44394 / Madison 698-R) (Brown rot fungus).